We begin with the raw amino-acid sequence, 58 residues long: Small ribosomal subunit protein bS21 (58 aa).

A disordered region spans residues 27-58; sequence GVLSEARKHEHYEKPSVKRKKKSEAARKRKFK. Basic and acidic residues predominate over residues 31 to 42; it reads EARKHEHYEKPS. The segment covering 43-58 has biased composition (basic residues); sequence VKRKKKSEAARKRKFK.

The protein belongs to the bacterial ribosomal protein bS21 family.

In Desulfitobacterium hafniense (strain DSM 10664 / DCB-2), this protein is Small ribosomal subunit protein bS21.